The primary structure comprises 474 residues: Dihydrolipoyl dehydrogenase (474 aa).

Residues 34-42 (EKEKLGGTC), Lys51, and Gly114 contribute to the FAD site. Cys42 and Cys47 are disulfide-bonded. Residues 188–192 (GGGVI), Glu211, Val245, and 278–281 (SIGR) each bind NAD(+). FAD contacts are provided by Asp320 and Ala328. His453 serves as the catalytic Proton acceptor.

This sequence belongs to the class-I pyridine nucleotide-disulfide oxidoreductase family. In terms of assembly, homodimer. FAD is required as a cofactor.

Its subcellular location is the cytoplasm. It catalyses the reaction N(6)-[(R)-dihydrolipoyl]-L-lysyl-[protein] + NAD(+) = N(6)-[(R)-lipoyl]-L-lysyl-[protein] + NADH + H(+). The branched-chain alpha-keto dehydrogenase complex catalyzes the overall conversion of alpha-keto acids to acyl-CoA and CO(2). It contains multiple copies of 3 enzymatic components: branched-chain alpha-keto acid decarboxylase (E1), lipoamide acyltransferase (E2) and lipoamide dehydrogenase (E3). This chain is Dihydrolipoyl dehydrogenase (bfmBC), found in Bacillus subtilis (strain 168).